Reading from the N-terminus, the 335-residue chain is Glycerol-3-phosphate dehydrogenase [NAD(P)+] (335 aa).

Residues Ser-15, Tyr-16, His-36, and Lys-110 each coordinate NADPH. 3 residues coordinate sn-glycerol 3-phosphate: Lys-110, Gly-139, and Thr-141. Ala-143 is an NADPH binding site. Sn-glycerol 3-phosphate contacts are provided by Lys-195, Asp-248, Ser-258, Arg-259, and Asn-260. Catalysis depends on Lys-195, which acts as the Proton acceptor. Arg-259 serves as a coordination point for NADPH. NADPH-binding residues include Val-283 and Glu-285.

It belongs to the NAD-dependent glycerol-3-phosphate dehydrogenase family.

Its subcellular location is the cytoplasm. It catalyses the reaction sn-glycerol 3-phosphate + NAD(+) = dihydroxyacetone phosphate + NADH + H(+). The enzyme catalyses sn-glycerol 3-phosphate + NADP(+) = dihydroxyacetone phosphate + NADPH + H(+). The protein operates within membrane lipid metabolism; glycerophospholipid metabolism. Its function is as follows. Catalyzes the reduction of the glycolytic intermediate dihydroxyacetone phosphate (DHAP) to sn-glycerol 3-phosphate (G3P), the key precursor for phospholipid synthesis. The chain is Glycerol-3-phosphate dehydrogenase [NAD(P)+] from Haemophilus influenzae (strain ATCC 51907 / DSM 11121 / KW20 / Rd).